The chain runs to 308 residues: MSEEKNYELWLDNYFFKPNFWQKCLTFVLFPLSVLYAFFAILNTFFRKKIVFKKPVISVGNLSFGGNGKTPLCKAIAREFDGVFIVLRGYKRKSKGLFVVKNQNEILCTLAQSGDEAMEYAFEENIKGVIVSEDRVKGIEKAFELGAKIVVLDDAFSKFHIKKFDILLESKIKPYFNFTLPSGAYRLPKIYEKRADFIALEGRDFVRYSFVKENPKAVLVTAIAKPFRLYEHFIKARACYFFKDHYEFKKEELENLLKKHNCDTLMLTFKDFVKVKDFGFKCQIIELNIELKDSLREKIKTYIKEFEQ.

Residue 63–70 (SFGGNGKT) participates in ATP binding.

Belongs to the LpxK family.

It carries out the reaction a lipid A disaccharide + ATP = a lipid IVA + ADP + H(+). The protein operates within glycolipid biosynthesis; lipid IV(A) biosynthesis; lipid IV(A) from (3R)-3-hydroxytetradecanoyl-[acyl-carrier-protein] and UDP-N-acetyl-alpha-D-glucosamine: step 6/6. Functionally, transfers the gamma-phosphate of ATP to the 4'-position of a tetraacyldisaccharide 1-phosphate intermediate (termed DS-1-P) to form tetraacyldisaccharide 1,4'-bis-phosphate (lipid IVA). In Campylobacter jejuni subsp. jejuni serotype O:23/36 (strain 81-176), this protein is Tetraacyldisaccharide 4'-kinase.